The following is a 294-amino-acid chain: Glycine--tRNA ligase alpha subunit (294 aa).

It belongs to the class-II aminoacyl-tRNA synthetase family. Tetramer of two alpha and two beta subunits.

The protein localises to the cytoplasm. It carries out the reaction tRNA(Gly) + glycine + ATP = glycyl-tRNA(Gly) + AMP + diphosphate. This Natranaerobius thermophilus (strain ATCC BAA-1301 / DSM 18059 / JW/NM-WN-LF) protein is Glycine--tRNA ligase alpha subunit.